Here is a 447-residue protein sequence, read N- to C-terminus: Glutamate--tRNA ligase 1 (447 aa).

The 'HIGH' region signature appears at 10–20 (PSPTGMLHVGN). The 'KMSKS' region signature appears at 240–244 (KISKR). Lys243 is an ATP binding site.

This sequence belongs to the class-I aminoacyl-tRNA synthetase family. Glutamate--tRNA ligase type 1 subfamily. As to quaternary structure, monomer.

Its subcellular location is the cytoplasm. It carries out the reaction tRNA(Glu) + L-glutamate + ATP = L-glutamyl-tRNA(Glu) + AMP + diphosphate. Its function is as follows. Catalyzes the attachment of glutamate to tRNA(Glu) in a two-step reaction: glutamate is first activated by ATP to form Glu-AMP and then transferred to the acceptor end of tRNA(Glu). This Rickettsia felis (strain ATCC VR-1525 / URRWXCal2) (Rickettsia azadi) protein is Glutamate--tRNA ligase 1.